The following is a 100-amino-acid chain: Sweet protein mabinlin-4 (100 aa).

4 disulfide bridges follow: Cys4–Cys49, Cys17–Cys38, Cys39–Cys87, and Cys51–Cys95.

It belongs to the 2S seed storage albumins family. Heterodimer of a small A and a large B chain linked by disulfide bonds.

Heat stable 2S seed storage protein having sweetness-inducing activity. This is Sweet protein mabinlin-4 from Capparis masaikai (Mabinlang).